Reading from the N-terminus, the 311-residue chain is Putative S-adenosyl-L-methionine-dependent methyltransferase MMAR_0358 (311 aa).

S-adenosyl-L-methionine is bound by residues aspartate 132 and aspartate 161–leucine 162.

Belongs to the UPF0677 family.

Functionally, exhibits S-adenosyl-L-methionine-dependent methyltransferase activity. The chain is Putative S-adenosyl-L-methionine-dependent methyltransferase MMAR_0358 from Mycobacterium marinum (strain ATCC BAA-535 / M).